An 80-amino-acid chain; its full sequence is Adipogenin (80 aa).

The helical transmembrane segment at 14 to 34 threads the bilayer; the sequence is FSFLVFWFCLPVGLLLLLIIW.

The protein belongs to the adipogenin family.

It localises to the membrane. The protein resides in the nucleus. Its function is as follows. Plays a role in stimulating adipocyte differentiation and development. This Homo sapiens (Human) protein is Adipogenin.